Here is a 241-residue protein sequence, read N- to C-terminus: LexA repressor (241 aa).

A DNA-binding region (H-T-H motif) is located at residues 26–46; sequence FDEMKTALDLRSKSGIHRLIT. Residues serine 162 and lysine 200 each act as for autocatalytic cleavage activity in the active site.

Belongs to the peptidase S24 family. Homodimer.

It carries out the reaction Hydrolysis of Ala-|-Gly bond in repressor LexA.. In terms of biological role, represses a number of genes involved in the response to DNA damage (SOS response), including recA and lexA. In the presence of single-stranded DNA, RecA interacts with LexA causing an autocatalytic cleavage which disrupts the DNA-binding part of LexA, leading to derepression of the SOS regulon and eventually DNA repair. The polypeptide is LexA repressor (Ruegeria sp. (strain TM1040) (Silicibacter sp.)).